A 431-amino-acid polypeptide reads, in one-letter code: Adenylosuccinate synthetase (431 aa).

Residues 15 to 21 and 43 to 45 each bind GTP; these read GDEGKGK and GHT. Asp16 functions as the Proton acceptor in the catalytic mechanism. Mg(2+) contacts are provided by Asp16 and Gly43. Residues 16–19, 41–44, Thr135, Arg149, Asn227, Thr242, and Arg306 contribute to the IMP site; these read DEGK and NAGH. The Proton donor role is filled by His44. 302-308 is a binding site for substrate; the sequence is VTTGRKR. Residues Arg308, 334 to 336, and 416 to 418 each bind GTP; these read KLD and GVG.

This sequence belongs to the adenylosuccinate synthetase family. Homodimer. It depends on Mg(2+) as a cofactor.

Its subcellular location is the cytoplasm. The enzyme catalyses IMP + L-aspartate + GTP = N(6)-(1,2-dicarboxyethyl)-AMP + GDP + phosphate + 2 H(+). The protein operates within purine metabolism; AMP biosynthesis via de novo pathway; AMP from IMP: step 1/2. In terms of biological role, plays an important role in the de novo pathway and in the salvage pathway of purine nucleotide biosynthesis. Catalyzes the first committed step in the biosynthesis of AMP from IMP. The chain is Adenylosuccinate synthetase from Monosiga brevicollis (Choanoflagellate).